The following is a 215-amino-acid chain: Urease accessory protein UreG 2 (215 aa).

11 to 18 serves as a coordination point for GTP; it reads GPVGSGKT.

This sequence belongs to the SIMIBI class G3E GTPase family. UreG subfamily. As to quaternary structure, homodimer. UreD, UreF and UreG form a complex that acts as a GTP-hydrolysis-dependent molecular chaperone, activating the urease apoprotein by helping to assemble the nickel containing metallocenter of UreC. The UreE protein probably delivers the nickel.

It is found in the cytoplasm. Its function is as follows. Facilitates the functional incorporation of the urease nickel metallocenter. This process requires GTP hydrolysis, probably effectuated by UreG. The protein is Urease accessory protein UreG 2 of Methylorubrum extorquens (strain PA1) (Methylobacterium extorquens).